The chain runs to 172 residues: Large ribosomal subunit protein uL10 (172 aa).

The protein belongs to the universal ribosomal protein uL10 family. Part of the ribosomal stalk of the 50S ribosomal subunit. The N-terminus interacts with L11 and the large rRNA to form the base of the stalk. The C-terminus forms an elongated spine to which L12 dimers bind in a sequential fashion forming a multimeric L10(L12)X complex.

Functionally, forms part of the ribosomal stalk, playing a central role in the interaction of the ribosome with GTP-bound translation factors. This is Large ribosomal subunit protein uL10 from Rhizobium etli (strain ATCC 51251 / DSM 11541 / JCM 21823 / NBRC 15573 / CFN 42).